Reading from the N-terminus, the 89-residue chain is Alpha-ketoglutarate dehydrogenase subunit 4, mitochondrial (89 aa).

This sequence belongs to the alpha-ketoglutarate dehydrogenase component 4 family. In terms of assembly, component of the 2-oxoglutarate dehydrogenase complex (OGDC), also called alpha-ketoglutarate dehydrogenase (KGDH) complex. The copmplex is composed of the catalytic subunits OGDH (2-oxoglutarate dehydrogenase kgd1; also called E1 subunit), DLST (dihydrolipoamide succinyltransferase kgd2; also called E2 subunit) and DLD (dihydrolipoamide dehydrogenase dld1; also called E3 subunit), and the assembly factor KGD4. Within OGDC, interacts (via N-terminus) with E3 subunit and (via C-terminus) with the complex core formed by E1 and E2 subunits.

It is found in the mitochondrion. In terms of biological role, molecular adapter that is necessary to a form a stable 2-oxoglutarate dehydrogenase enzyme complex (OGDC). Required for incorporation of the E3 subunit (dld1) into the E1-E2 core (kgd1-kgd2) of mitochondrial OGDC, and acting as a stability factor for the fully assembled complex. In Schizosaccharomyces pombe (strain 972 / ATCC 24843) (Fission yeast), this protein is Alpha-ketoglutarate dehydrogenase subunit 4, mitochondrial (kgd4).